We begin with the raw amino-acid sequence, 130 residues long: Small ribosomal subunit protein uS9 (130 aa).

It belongs to the universal ribosomal protein uS9 family.

The sequence is that of Small ribosomal subunit protein uS9 from Alkalilimnicola ehrlichii (strain ATCC BAA-1101 / DSM 17681 / MLHE-1).